The sequence spans 1419 residues: Multidrug resistance protein 1 (1419 aa).

The interval 1–37 (MGKEQKEKKDGNLSIKEEVEKELNKKSTAELFRKIKN) is r domain; regulates transporter activity. The Cytoplasmic segment spans residues 1 to 60 (MGKEQKEKKDGNLSIKEEVEKELNKKSTAELFRKIKNEKISFFLPFKCLPAQHRKLLFIS). The ABC transmembrane type-1 1 domain maps to 58-345 (FISFVCAVLS…ILPNITEYMK (288 aa)). The chain crosses the membrane as a helical span at residues 61–81 (FVCAVLSGGTLPFFISVFGVI). Topologically, residues 82-90 (LKNMNLGDD) are vacuolar. Residues 91–111 (INPIILSLVSIGLVQFILSMI) form a helical membrane-spanning segment. Over 112–168 (SSYCMDVITSKILKTLKLEYLRSVFYQDGQFHDNNPGSKLRSDLDFYLEQVSSGIGT) the chain is Cytoplasmic. The helical transmembrane segment at 169–189 (KFITIFTYASSFLGLYIWSLI) threads the bilayer. The Vacuolar portion of the chain corresponds to 190-191 (KN). The chain crosses the membrane as a helical span at residues 192–212 (ARLTLCITCVFPLIYVCGVIC). Topologically, residues 213–275 (NKKVKLNKKT…KYILKANFVE (63 aa)) are cytoplasmic. A helical membrane pass occupies residues 276 to 296 (ALHIGLINGLILVSYAFGFWY). At 297–316 (GTRIIINSATNQYPNNDFNG) the chain is on the vacuolar side. The chain crosses the membrane as a helical span at residues 317 to 337 (ASVISILLGVLISMFMLTIIL). The Cytoplasmic portion of the chain corresponds to 338–788 (PNITEYMKAL…YKEIFSYKKD (451 aa)). Positions 378–662 (IEFKNVRFHY…NNNNNNNNNK (285 aa)) constitute an ABC transporter 1 domain. Residues Y387, T389, R390, S415, C417, G418, K419, S420, T421, Q462, K562, S564, G566, and Q567 each coordinate ATP. Q462 contacts Mg(2+). Disordered stretches follow at residues 639-665 (ERSD…KINN) and 697-752 (SSNK…TAEN). Low complexity-rich tracts occupy residues 643 to 665 (NNNN…KINN) and 697 to 715 (SSNK…NKSS). Positions 723-749 (GNDADNMNSLSIHENENISNNRNCKNT) are enriched in polar residues. A helical transmembrane segment spans residues 789-809 (VTIIFFSILVAGGLYPVFALL). An ABC transmembrane type-1 2 domain is found at 791–1083 (IIFFSILVAG…GSYAGKLMSL (293 aa)). At 810–829 (YARYVSTLFDFANLEYNSNK) the chain is on the vacuolar side. Residues 830-850 (YSIYILLIAIAMFISETLKNY) traverse the membrane as a helical segment. Residues 851 to 907 (YNNKIGEKVEKTMKRRLFENILYQEMSFFDQDKNTPGVLSAHINRDVHLLKTGLVNN) are Cytoplasmic-facing. The next 2 membrane-spanning stretches (helical) occupy residues 908-928 (IVIF…SFYF) and 929-949 (CPIV…VFAV). Residues 950–1032 (RARLTKSKEI…RIIVNAALWG (83 aa)) are Cytoplasmic-facing. Residues 1033–1053 (FSQSAQLFINSFAYWFGSFLI) traverse the membrane as a helical segment. Topologically, residues 1054-1057 (KRGT) are vacuolar. The chain crosses the membrane as a helical span at residues 1058–1078 (ILVDDFMKSLFTFIFTGSYAG). Topologically, residues 1079–1419 (KLMSLKGDSE…IYKKYVKLAK (341 aa)) are cytoplasmic. An ABC transporter 2 domain is found at 1126–1416 (VDIKDVNFRY…QDGIYKKYVK (291 aa)). ATP-binding residues include Y1135, R1138, T1163, G1164, G1166, K1167, S1168, T1169, Q1256, L1312, S1313, G1315, and Q1316. Position 1168 (S1168) interacts with Mg(2+). Q1256 lines the Mg(2+) pocket.

Belongs to the ABC transporter superfamily. ABCB family. Multidrug resistance exporter (TC 3.A.1.201) subfamily.

It is found in the vacuole membrane. It carries out the reaction ATP + H2O + xenobioticSide 1 = ADP + phosphate + xenobioticSide 2.. Functionally, energy-dependent efflux pump responsible for decreased drug accumulation in multidrug-resistant cells. Transports lumefantrine, mefloquine, chloroquine, quinine, quinidine, amodiaquine, piperaquine, dihydroartemisinin and quinacrine. This chain is Multidrug resistance protein 1, found in Plasmodium falciparum (isolate 3D7).